We begin with the raw amino-acid sequence, 312 residues long: Ribonuclease Z (312 aa).

Zn(2+)-binding residues include H63, H65, D67, H68, H141, D212, and H270. D67 acts as the Proton acceptor in catalysis.

Belongs to the RNase Z family. Homodimer. Zn(2+) serves as cofactor.

It catalyses the reaction Endonucleolytic cleavage of RNA, removing extra 3' nucleotides from tRNA precursor, generating 3' termini of tRNAs. A 3'-hydroxy group is left at the tRNA terminus and a 5'-phosphoryl group is left at the trailer molecule.. In terms of biological role, zinc phosphodiesterase, which displays some tRNA 3'-processing endonuclease activity. Probably involved in tRNA maturation, by removing a 3'-trailer from precursor tRNA. The chain is Ribonuclease Z from Latilactobacillus sakei subsp. sakei (strain 23K) (Lactobacillus sakei subsp. sakei).